The chain runs to 162 residues: Caveolin-2 (162 aa).

Residues 1-86 (MGLEKEKLEC…FELVKFIFYR (86 aa)) are Cytoplasmic-facing. Residues 87-107 (LLTTLLAVPAAFILGVVFGVL) constitute an intramembrane region (helical). The Cytoplasmic portion of the chain corresponds to 108–162 (SCIHIWLVMPVTRSFLMLLPSIQVVWKSVTDMFITPLFHSMGRSLSSIQVRTSDT).

This sequence belongs to the caveolin family. As to quaternary structure, homooligomer.

Its subcellular location is the golgi apparatus membrane. The protein localises to the cell membrane. It is found in the membrane. The protein resides in the caveola. Functionally, may act as a scaffolding protein within caveolar membranes. Interacts directly with G-protein alpha subunits and can functionally regulate their activity. The protein is Caveolin-2 (cav2) of Takifugu rubripes (Japanese pufferfish).